Consider the following 371-residue polypeptide: o-succinylbenzoate synthase (371 aa).

Lysine 164 functions as the Proton donor in the catalytic mechanism. Positions 189, 214, and 239 each coordinate Mg(2+). Lysine 263 (proton acceptor) is an active-site residue.

The protein belongs to the mandelate racemase/muconate lactonizing enzyme family. MenC type 2 subfamily. A divalent metal cation serves as cofactor.

It carries out the reaction (1R,6R)-6-hydroxy-2-succinyl-cyclohexa-2,4-diene-1-carboxylate = 2-succinylbenzoate + H2O. It participates in quinol/quinone metabolism; 1,4-dihydroxy-2-naphthoate biosynthesis; 1,4-dihydroxy-2-naphthoate from chorismate: step 4/7. Its pathway is quinol/quinone metabolism; menaquinone biosynthesis. Functionally, converts 2-succinyl-6-hydroxy-2,4-cyclohexadiene-1-carboxylate (SHCHC) to 2-succinylbenzoate (OSB). Does not show detectable N-acylamino acid racemase (NAAAR) activity with N-acetyl-S-methionine as substrate. This Bacillus subtilis (strain 168) protein is o-succinylbenzoate synthase.